The following is a 259-amino-acid chain: 3-methyl-2-oxobutanoate hydroxymethyltransferase (259 aa).

Residues Asp-44 and Asp-83 each coordinate Mg(2+). 3-methyl-2-oxobutanoate is bound by residues 44–45 (DS), Asp-83, and Lys-112. Glu-114 lines the Mg(2+) pocket. Glu-177 functions as the Proton acceptor in the catalytic mechanism.

It belongs to the PanB family. As to quaternary structure, homodecamer; pentamer of dimers. Mg(2+) serves as cofactor.

The protein resides in the cytoplasm. The catalysed reaction is 3-methyl-2-oxobutanoate + (6R)-5,10-methylene-5,6,7,8-tetrahydrofolate + H2O = 2-dehydropantoate + (6S)-5,6,7,8-tetrahydrofolate. The protein operates within cofactor biosynthesis; (R)-pantothenate biosynthesis; (R)-pantoate from 3-methyl-2-oxobutanoate: step 1/2. In terms of biological role, catalyzes the reversible reaction in which hydroxymethyl group from 5,10-methylenetetrahydrofolate is transferred onto alpha-ketoisovalerate to form ketopantoate. This is 3-methyl-2-oxobutanoate hydroxymethyltransferase from Nitratiruptor sp. (strain SB155-2).